The primary structure comprises 280 residues: Probable formate transporter (280 aa).

6 helical membrane-spanning segments follow: residues leucine 33–glutamate 49, leucine 67–alanine 83, serine 116–tyrosine 133, phenylalanine 177–valine 195, serine 204–phenylalanine 219, and leucine 253–leucine 272.

The protein belongs to the FNT transporter (TC 1.A.16) family.

It localises to the cell membrane. Its function is as follows. May act as a formate transporter. This is Probable formate transporter (fdhC) from Methanobacterium formicicum.